We begin with the raw amino-acid sequence, 232 residues long: Glutathione S-transferase E14 (232 aa).

A GST N-terminal domain is found at 4 to 85 (PKPILYYDER…HLAEKFDEGG (82 aa)). The region spanning 91–218 (EHAERMKVLN…RQTMESVGSF (128 aa)) is the GST C-terminal domain.

The protein belongs to the GST superfamily. Epsilon family. As to expression, expressed in the adult ovary (at protein level).

It catalyses the reaction RX + glutathione = an S-substituted glutathione + a halide anion + H(+). Its function is as follows. Conjugation of reduced glutathione to a wide number of exogenous and endogenous hydrophobic electrophiles. Essential for ecdysteroid biosynthesis. May be involved in detoxification. This Drosophila melanogaster (Fruit fly) protein is Glutathione S-transferase E14.